Here is a 355-residue protein sequence, read N- to C-terminus: Histidinol-phosphate aminotransferase (355 aa).

At K214 the chain carries N6-(pyridoxal phosphate)lysine.

It belongs to the class-II pyridoxal-phosphate-dependent aminotransferase family. Histidinol-phosphate aminotransferase subfamily. In terms of assembly, homodimer. Requires pyridoxal 5'-phosphate as cofactor.

It carries out the reaction L-histidinol phosphate + 2-oxoglutarate = 3-(imidazol-4-yl)-2-oxopropyl phosphate + L-glutamate. It functions in the pathway amino-acid biosynthesis; L-histidine biosynthesis; L-histidine from 5-phospho-alpha-D-ribose 1-diphosphate: step 7/9. This is Histidinol-phosphate aminotransferase (hisC) from Buchnera aphidicola subsp. Schizaphis graminum (strain Sg).